The following is a 391-amino-acid chain: Alanine racemase, biosynthetic (391 aa).

Catalysis depends on lysine 52, which acts as the Proton acceptor; specific for D-alanine. N6-(pyridoxal phosphate)lysine is present on lysine 52. Arginine 149 lines the substrate pocket. The active-site Proton acceptor; specific for L-alanine is the tyrosine 271. Methionine 330 lines the substrate pocket.

This sequence belongs to the alanine racemase family. Pyridoxal 5'-phosphate serves as cofactor.

The enzyme catalyses L-alanine = D-alanine. The protein operates within amino-acid biosynthesis; D-alanine biosynthesis; D-alanine from L-alanine: step 1/1. Its pathway is cell wall biogenesis; peptidoglycan biosynthesis. Catalyzes the interconversion of L-alanine and D-alanine. Provides the D-alanine required for cell wall biosynthesis. The polypeptide is Alanine racemase, biosynthetic (alr) (Agrobacterium fabrum (strain C58 / ATCC 33970) (Agrobacterium tumefaciens (strain C58))).